Consider the following 638-residue polypeptide: ATP-dependent rRNA helicase spb4 (638 aa).

A Q motif motif is present at residues 14 to 42 (WDAVNPPLSEWVLDAVSSMGFTRMTPVQA). Residues 45 to 249 (IPLFMAHKDV…RVGLRNPVKV (205 aa)) form the Helicase ATP-binding domain. ATP is bound at residue 58 to 65 (AVTGSGKT). The DEAD box signature appears at 197-200 (DEAD). Positions 283–437 (ALKHILNSVQ…PITVSDAEAA (155 aa)) constitute a Helicase C-terminal domain. Residues 521 to 629 (AYKDKQREKR…AKADKDAEEG (109 aa)) are a coiled coil. Positions 538 to 638 (MAESGQQQTT…GGDEEFTGFD (101 aa)) are disordered. The segment covering 574 to 597 (MKQVRQERKRWEKMTEEEKKKALE) has biased composition (basic and acidic residues). Acidic residues predominate over residues 625-638 (DAEEGGDEEFTGFD).

Belongs to the DEAD box helicase family. DDX55/SPB4 subfamily. Component of pre-60S ribosomal complexes.

It localises to the nucleus. It is found in the nucleolus. It catalyses the reaction ATP + H2O = ADP + phosphate + H(+). ATP-binding RNA helicase involved in the biogenesis of 60S ribosomal subunits. Binds 90S pre-ribosomal particles and dissociates from pre-60S ribosomal particles after processing of 27SB pre-rRNA. Required for the normal formation of 18S rRNA through the processing of pre-rRNAs at sites A0, A1 and A2, and the normal formation of 25S and 5.8S rRNAs through the processing of pre-rRNAs at sites C1 and C2. This Emericella nidulans (strain FGSC A4 / ATCC 38163 / CBS 112.46 / NRRL 194 / M139) (Aspergillus nidulans) protein is ATP-dependent rRNA helicase spb4.